The chain runs to 333 residues: L-lactate dehydrogenase B chain (333 aa).

NAD(+) is bound by residues 29–57 (GQVG…LEDK) and arginine 99. Substrate is bound by residues arginine 106, asparagine 138, and arginine 169. Residue asparagine 138 participates in NAD(+) binding. Histidine 193 (proton acceptor) is an active-site residue. Position 248 (threonine 248) interacts with substrate.

It belongs to the LDH/MDH superfamily. LDH family. In terms of assembly, homotetramer.

It localises to the cytoplasm. It catalyses the reaction (S)-lactate + NAD(+) = pyruvate + NADH + H(+). The protein operates within fermentation; pyruvate fermentation to lactate; (S)-lactate from pyruvate: step 1/1. Its function is as follows. Interconverts simultaneously and stereospecifically pyruvate and lactate with concomitant interconversion of NADH and NAD(+). This is L-lactate dehydrogenase B chain (LDHB) from Anas platyrhynchos (Mallard).